We begin with the raw amino-acid sequence, 164 residues long: NADH-quinone oxidoreductase subunit I (164 aa).

4Fe-4S ferredoxin-type domains lie at Leu-55 to Glu-85 and Thr-95 to Asn-124. 8 residues coordinate [4Fe-4S] cluster: Cys-65, Cys-68, Cys-71, Cys-75, Cys-104, Cys-107, Cys-110, and Cys-114.

The protein belongs to the complex I 23 kDa subunit family. NDH-1 is composed of 14 different subunits. Subunits NuoA, H, J, K, L, M, N constitute the membrane sector of the complex. [4Fe-4S] cluster serves as cofactor.

It is found in the cell inner membrane. The catalysed reaction is a quinone + NADH + 5 H(+)(in) = a quinol + NAD(+) + 4 H(+)(out). NDH-1 shuttles electrons from NADH, via FMN and iron-sulfur (Fe-S) centers, to quinones in the respiratory chain. The immediate electron acceptor for the enzyme in this species is believed to be ubiquinone. Couples the redox reaction to proton translocation (for every two electrons transferred, four hydrogen ions are translocated across the cytoplasmic membrane), and thus conserves the redox energy in a proton gradient. This is NADH-quinone oxidoreductase subunit I from Roseobacter denitrificans (strain ATCC 33942 / OCh 114) (Erythrobacter sp. (strain OCh 114)).